We begin with the raw amino-acid sequence, 91 residues long: Acylphosphatase (91 aa).

The 86-residue stretch at 6-91 (CMRCYISGRV…WEDYISFDVL (86 aa)) folds into the Acylphosphatase-like domain. Residues R21 and N39 contribute to the active site.

It belongs to the acylphosphatase family.

The catalysed reaction is an acyl phosphate + H2O = a carboxylate + phosphate + H(+). The sequence is that of Acylphosphatase (acyP) from Legionella pneumophila subsp. pneumophila (strain Philadelphia 1 / ATCC 33152 / DSM 7513).